Consider the following 164-residue polypeptide: UPF0114 protein YqhA (164 aa).

A run of 3 helical transmembrane segments spans residues 15-35 (LLAPVYFGLSLALIALALKFF), 53-73 (LILVLLSLVDMTLVGGLLVMV), and 136-156 (LMWYVIIHLTFVLSAFVMGYL).

The protein belongs to the UPF0114 family.

The protein localises to the cell membrane. The polypeptide is UPF0114 protein YqhA (Escherichia coli O6:H1 (strain CFT073 / ATCC 700928 / UPEC)).